Reading from the N-terminus, the 457-residue chain is Chromogranin-A (457 aa).

The N-terminal stretch at 1–18 (MRSAAVLALLLCAGQVTA) is a signal peptide. Residues C35 and C56 are joined by a disulfide bond. The O-glycosylated at one site only in cerebrospinal fluid stretch occupies residues 41-59 (SDTLSKPSPMPVSQECFET). The disordered stretch occupies residues 88 to 440 (KERAHQQKKH…DQELESLSAI (353 aa)). Over residues 116–144 (ELKEAVEEPSSKDVMEKREDSKEAEKSGE) the composition is skewed to basic and acidic residues. Residue S142 is modified to Phosphoserine. Over residues 171-180 (GEEEEEEEEA) the composition is skewed to acidic residues. O-linked (GalNAc...) threonine glycosylation is found at T181 and T183. An O-glycosylated at one site only in cerebrospinal fluid region spans residues 181-191 (TNTHPPASLPS). The segment covering 182–191 (NTHPPASLPS) has biased composition (polar residues). A Phosphotyrosine modification is found at Y194. S203 and S218 each carry phosphoserine. Residues 229–249 (EEEEEEEEAEAGEEAVPEEEG) are compositionally biased toward acidic residues. A glycan (O-linked (GalNAc...) threonine) is linked at T251. 2 stretches are compositionally biased toward basic and acidic residues: residues 263–272 (KEIRKGESRS) and 291–303 (PEGK…SQQK). Phosphoserine occurs at positions 270 and 300. Position 319 is a glycine amide (G319). 3 positions are modified to phosphoserine: S322, S333, and S371. The segment covering 330–360 (ERLSKEWEDSKRWSKMDQLAKELTAEKRLEG) has biased composition (basic and acidic residues). At M372 the chain carries Methionine sulfoxide. Phosphoserine occurs at positions 398, 402, 424, and 438. Basic and acidic residues predominate over residues 414 to 431 (YPEEKKEEEGSANRRPED). An O-linked (Xyl...) (chondroitin sulfate) serine glycan is attached at S424. An Arginine amide modification is found at R456.

Belongs to the chromogranin/secretogranin protein family. Self-interacts; self-assembly is promoted in vitro by chondroitin sulfate attachment which occurs at mildly acidic pH conditions. Interacts with SCG3. Interacts with ITPR1 in the secretory granules. Post-translationally, sulfated on tyrosine residues and/or contains sulfated glycans. O-glycosylated with core 1 or possibly core 8 glycans. Contains chondroitin sulfate (CS); CS attachment is pH-dependent, being observed at mildly acidic conditions of pH 5 but not at neutral pH, and promotes self-assembly in vitro. In terms of processing, proteolytic processing gives rise to an additional longer form of catestatin (residues 358-390) which displays a less potent catecholamine release-inhibitory activity. Plasmin-mediated proteolytic processing can give rise to additional shorter and longer forms of catestatin peptides. Detected in cerebrospinal fluid (at protein level). Detected in urine (at protein level). In terms of tissue distribution, found in the brain.

It localises to the secreted. The protein localises to the cytoplasmic vesicle. It is found in the secretory vesicle. Its subcellular location is the neuronal dense core vesicle. Functionally, strongly inhibits glucose induced insulin release from the pancreas. In terms of biological role, inhibits catecholamine release from chromaffin cells and noradrenergic neurons by acting as a non-competitive nicotinic cholinergic antagonist. Displays antibacterial activity against Gram-positive bacteria S.aureus and M.luteus, and Gram-negative bacteria E.coli and P.aeruginosa. Can induce mast cell migration, degranulation and production of cytokines and chemokines. Acts as a potent scavenger of free radicals in vitro. May play a role in the regulation of cardiac function and blood pressure. Regulates granule biogenesis in endocrine cells by up-regulating the transcription of protease nexin 1 (SERPINE2) via a cAMP-PKA-SP1 pathway. This leads to inhibition of granule protein degradation in the Golgi complex which in turn promotes granule formation. This chain is Chromogranin-A (CHGA), found in Homo sapiens (Human).